Consider the following 190-residue polypeptide: Lipid A 1-phosphatase (190 aa).

5 consecutive transmembrane segments (helical) span residues 22-42 (LLAL…PKVP), 60-80 (FIPT…VGLF), 117-137 (GNFN…AFLM), 145-162 (YFWL…RIYL), and 164-184 (MHTI…VSLF).

Belongs to the lipid A LpxE 1-phosphatase family. Does not require divalent cations. serves as cofactor.

The protein resides in the cell inner membrane. The protein operates within bacterial outer membrane biogenesis; LPS lipid A biosynthesis. Removes the 1-phosphate group from tetra- and probably hexaacylated lipid A species, has no requirement for the Kdo moiety of lipid A. Has no 4'-phosphatase activity. Has no activity on phospholipids (phosphatidylglycerol, phosphatidylethanolamine or cardiolipin). This enzyme has to act before EptA can attach phosphoethanolamine to the 1-position of lipid A. Absence of the 1-phosphate group renders the bacteria partially resistant to host-derived cationic antimicrobial peptides (CAMP), allowing it to camouflage itself from the host innate immune response, and plays a role in the long-term colonization of the host's stomach. In Helicobacter pylori (strain ATCC 700392 / 26695) (Campylobacter pylori), this protein is Lipid A 1-phosphatase.